Reading from the N-terminus, the 578-residue chain is Potassium-transporting ATPase potassium-binding subunit (578 aa).

10 consecutive transmembrane segments (helical) span residues 3-23 (NAIL…IPLG), 65-85 (SFSV…LNLL), 134-154 (GLTV…FALI), 175-195 (IVLY…VSQG), 261-281 (FSNL…CFTF), 293-313 (AIFI…GVSE), 397-417 (GLYG…LMVG), 435-455 (AMLI…LASI), 503-523 (IGLI…AIAG), and 543-563 (LLFI…SFFP).

Belongs to the KdpA family. In terms of assembly, the system is composed of three essential subunits: KdpA, KdpB and KdpC.

The protein resides in the cell membrane. Functionally, part of the high-affinity ATP-driven potassium transport (or Kdp) system, which catalyzes the hydrolysis of ATP coupled with the electrogenic transport of potassium into the cytoplasm. This subunit binds the extracellular potassium ions and delivers the ions to the membrane domain of KdpB through an intramembrane tunnel. The protein is Potassium-transporting ATPase potassium-binding subunit of Clostridium perfringens (strain ATCC 13124 / DSM 756 / JCM 1290 / NCIMB 6125 / NCTC 8237 / Type A).